We begin with the raw amino-acid sequence, 363 residues long: Carbamoyl phosphate synthase small chain (363 aa).

Residues 1-173 (MMKAFLVLDN…SKYIFGTHTG (173 aa)) form a CPSase region. L-glutamine-binding residues include S46, G225, and G227. Residues 177-363 (KLAVYDYGVK…YDLVEKTKKG (187 aa)) form the Glutamine amidotransferase type-1 domain. C253 acts as the Nucleophile in catalysis. Residues L254, Q257, N295, G297, and F298 each coordinate L-glutamine. Catalysis depends on residues H336 and E338.

The protein belongs to the CarA family. In terms of assembly, composed of two chains; the small (or glutamine) chain promotes the hydrolysis of glutamine to ammonia, which is used by the large (or ammonia) chain to synthesize carbamoyl phosphate. Tetramer of heterodimers (alpha,beta)4.

It carries out the reaction hydrogencarbonate + L-glutamine + 2 ATP + H2O = carbamoyl phosphate + L-glutamate + 2 ADP + phosphate + 2 H(+). The catalysed reaction is L-glutamine + H2O = L-glutamate + NH4(+). Its pathway is amino-acid biosynthesis; L-arginine biosynthesis; carbamoyl phosphate from bicarbonate: step 1/1. The protein operates within pyrimidine metabolism; UMP biosynthesis via de novo pathway; (S)-dihydroorotate from bicarbonate: step 1/3. Functionally, small subunit of the glutamine-dependent carbamoyl phosphate synthetase (CPSase). CPSase catalyzes the formation of carbamoyl phosphate from the ammonia moiety of glutamine, carbonate, and phosphate donated by ATP, constituting the first step of 2 biosynthetic pathways, one leading to arginine and/or urea and the other to pyrimidine nucleotides. The small subunit (glutamine amidotransferase) binds and cleaves glutamine to supply the large subunit with the substrate ammonia. The sequence is that of Carbamoyl phosphate synthase small chain from Leptospira interrogans serogroup Icterohaemorrhagiae serovar copenhageni (strain Fiocruz L1-130).